Consider the following 762-residue polypeptide: LON peptidase N-terminal domain and RING finger protein 1 (762 aa).

The disordered stretch occupies residues 1–35 (MSSPAVARASPGGNREASGGPRSRNGPWEVGGGGE). One copy of the TPR 1 repeat lies at 47 to 80 (WELLLRRGELLALGGHLKGALEAFAAALRRGAPA). The RING-type 1 zinc finger occupies 118 to 154 (CLSCRGFLSEPVTVPCGHSYCRRCLRRELRARCRLCR). TPR repeat units follow at residues 201 to 233 (ARAA…EPSD), 235 to 267 (TLKI…LPNW), and 268 to 301 (PEVY…DEDF). Phosphoserine is present on Ser420. The RING-type 2 zinc finger occupies 468–506 (CSLCMRLFFEPVTTPCGHSFCKNCLERCLDHAPYCPLCK). Residues 547 to 757 (TAELSHLTKN…KIQHILTYFS (211 aa)) form the Lon N-terminal domain.

The polypeptide is LON peptidase N-terminal domain and RING finger protein 1 (Lonrf1) (Mus musculus (Mouse)).